A 68-amino-acid chain; its full sequence is Long neurotoxin 1 (68 aa).

Cystine bridges form between cysteine 3-cysteine 20, cysteine 13-cysteine 41, cysteine 26-cysteine 30, cysteine 45-cysteine 56, and cysteine 57-cysteine 62.

It belongs to the three-finger toxin family. Long-chain subfamily. Type II alpha-neurotoxin sub-subfamily. In terms of tissue distribution, expressed by the venom gland.

Its subcellular location is the secreted. Its function is as follows. Binds with high affinity to muscular (alpha-1/CHRNA1) and neuronal (alpha-7/CHRNA7) nicotinic acetylcholine receptor (nAChR) and inhibits acetylcholine from binding to the receptor, thereby impairing neuromuscular and neuronal transmission. This Aspidelaps scutatus (Shield-nose snake) protein is Long neurotoxin 1.